Here is a 184-residue protein sequence, read N- to C-terminus: Inorganic pyrophosphatase (184 aa).

The substrate site is built by K19, R33, and Y45. Mg(2+) contacts are provided by D55, D60, and D92. Y129 serves as a coordination point for substrate.

This sequence belongs to the PPase family. Homohexamer. Mg(2+) serves as cofactor.

The protein localises to the cytoplasm. It catalyses the reaction diphosphate + H2O = 2 phosphate + H(+). Functionally, catalyzes the hydrolysis of inorganic pyrophosphate (PPi) forming two phosphate ions. In Mycoplasma pneumoniae (strain ATCC 29342 / M129 / Subtype 1) (Mycoplasmoides pneumoniae), this protein is Inorganic pyrophosphatase.